Consider the following 328-residue polypeptide: Tetraacyldisaccharide 4'-kinase (328 aa).

An ATP-binding site is contributed by 55 to 62 (TAGGNGKT).

It belongs to the LpxK family.

It carries out the reaction a lipid A disaccharide + ATP = a lipid IVA + ADP + H(+). Its pathway is glycolipid biosynthesis; lipid IV(A) biosynthesis; lipid IV(A) from (3R)-3-hydroxytetradecanoyl-[acyl-carrier-protein] and UDP-N-acetyl-alpha-D-glucosamine: step 6/6. Its function is as follows. Transfers the gamma-phosphate of ATP to the 4'-position of a tetraacyldisaccharide 1-phosphate intermediate (termed DS-1-P) to form tetraacyldisaccharide 1,4'-bis-phosphate (lipid IVA). The chain is Tetraacyldisaccharide 4'-kinase from Escherichia fergusonii (strain ATCC 35469 / DSM 13698 / CCUG 18766 / IAM 14443 / JCM 21226 / LMG 7866 / NBRC 102419 / NCTC 12128 / CDC 0568-73).